We begin with the raw amino-acid sequence, 152 residues long: ESAT-6 secretion machinery protein EssA (152 aa).

The Cytoplasmic portion of the chain corresponds to 1 to 114 (MLMNSVIALT…PYIQNKQEKK (114 aa)). Residues 115–135 (IFPYILMSVGAFLTLGFVIFS) traverse the membrane as a helical segment. Residues 136 to 152 (IHKGRRTKNESARKSNI) are Extracellular-facing.

This sequence belongs to the EssA family.

The protein resides in the cell membrane. In terms of biological role, component of the ESAT-6 secretion system (Ess). Required for the secretion of EsxA and EsxB. In Staphylococcus aureus (strain Mu50 / ATCC 700699), this protein is ESAT-6 secretion machinery protein EssA.